We begin with the raw amino-acid sequence, 324 residues long: Myoblast determination protein 1 homolog (324 aa).

Residues Val-125–Arg-146 form a disordered region. In terms of domain architecture, bHLH spans Asp-155–Leu-206. Residues Tyr-251–His-272 are disordered. Positions Met-256 to Asp-267 are enriched in acidic residues.

In terms of assembly, efficient DNA binding requires dimerization with another bHLH protein. In terms of tissue distribution, body wall muscle cells; in clonal muscle precursors, in a set of early embryonic blastomeres (the ms-granddaughters), and in six glial-like cells called GLRS.

It localises to the nucleus. Functionally, involved in myogenesis, in cooperation with transcription factors unc-120 and hnd-1. Acts redundantly with fozi-1 to promote body wall muscle cell and coelomocyte specification in postembryonic mesoderm progenitors, probably through suppression of sem-2. This Caenorhabditis elegans protein is Myoblast determination protein 1 homolog.